A 438-amino-acid chain; its full sequence is Phospholipase D Y (438 aa).

Positions 1–19 (MIINRLFIIIVLFFVNVNS) are cleaved as a signal peptide. Asparagine 50 carries N-linked (GlcNAc...) asparagine glycosylation. In terms of domain architecture, PLD phosphodiesterase 1 spans 145–172 (GSGVLHTKLIIIDESSAYVGSANADWSS). Active-site residues include histidine 150, lysine 152, and aspartate 157. N-linked (GlcNAc...) asparagine glycosylation is found at asparagine 223, asparagine 336, and asparagine 394. The PLD phosphodiesterase 2 domain maps to 373–399 (YTRVNHAKFMVTEKQSYVGTSNWSQDY).

Belongs to the phospholipase D family.

It carries out the reaction a 1,2-diacyl-sn-glycero-3-phosphocholine + H2O = a 1,2-diacyl-sn-glycero-3-phosphate + choline + H(+). Inhibited by butan-1-ol. Hydrolyzes membrane phospholipids, such as PtdCho (phosphatidylcholine), producing the free headgroup and PtdOH (phosphatidic acid; signaling molecule on its own). This is Phospholipase D Y (pldY) from Dictyostelium discoideum (Social amoeba).